A 180-amino-acid chain; its full sequence is Protein PHLOEM PROTEIN 2-LIKE A9 (180 aa).

The interval 1-21 (MSSQKSSHHKADSKMEQDNNR) is disordered. Basic and acidic residues predominate over residues 9–21 (HKADSKMEQDNNR).

The sequence is that of Protein PHLOEM PROTEIN 2-LIKE A9 (PP2A9) from Arabidopsis thaliana (Mouse-ear cress).